The chain runs to 130 residues: Small ribosomal subunit protein uS9 (130 aa).

Belongs to the universal ribosomal protein uS9 family.

This Saccharophagus degradans (strain 2-40 / ATCC 43961 / DSM 17024) protein is Small ribosomal subunit protein uS9.